The sequence spans 279 residues: UTP--glucose-1-phosphate uridylyltransferase (279 aa).

This sequence belongs to the UDPGP type 2 family.

It catalyses the reaction alpha-D-glucose 1-phosphate + UTP + H(+) = UDP-alpha-D-glucose + diphosphate. May play a role in stationary phase survival. The polypeptide is UTP--glucose-1-phosphate uridylyltransferase (galU) (Pseudomonas aeruginosa).